The chain runs to 74 residues: Peptide BmKb1 (74 aa).

An N-terminal signal peptide occupies residues 1-22 (MEIKYLLTVFLVLLIVSDHCQA). The residue at position 40 (Lys-40) is a Lysine amide. Residues 46-74 (DLNGYIDHFKNFRKRDAELEELLSKLPIY) constitute a propeptide that is removed on maturation.

The protein belongs to the non-disulfide-bridged peptide (NDBP) superfamily. Short antimicrobial peptide (group 4) family. Expressed by the venom gland.

Its subcellular location is the secreted. The protein resides in the target cell membrane. Its function is as follows. Has antibacterial activity against Gram-positive bacteria S.aureus, M.luteus, B.subtilis, and Gram-negative bacteria E.coli, and P.aeruginosa. The polypeptide is Peptide BmKb1 (Olivierus martensii (Manchurian scorpion)).